The sequence spans 81 residues: YcgL domain-containing protein Tgr7_3126 (81 aa).

One can recognise a YcgL domain in the interval Met-1 to Leu-81.

In Thioalkalivibrio sulfidiphilus (strain HL-EbGR7), this protein is YcgL domain-containing protein Tgr7_3126.